Consider the following 563-residue polypeptide: Probable tRNA (uracil-O(2)-)-methyltransferase (563 aa).

The segment at 536–563 (TIRKAPCWMSLHHPDGCPVGQEACRYEH) adopts a C3H1-type zinc-finger fold.

Belongs to the TRM44 family.

It is found in the cytoplasm. It catalyses the reaction uridine(44) in tRNA(Ser) + S-adenosyl-L-methionine = 2'-O-methyluridine(44) in tRNA(Ser) + S-adenosyl-L-homocysteine + H(+). Functionally, probable adenosyl-L-methionine (AdoMet)-dependent tRNA (uracil-O(2)-)-methyltransferase. The protein is Probable tRNA (uracil-O(2)-)-methyltransferase of Caenorhabditis elegans.